An 86-amino-acid polypeptide reads, in one-letter code: Small ribosomal subunit protein bS16 (86 aa).

This sequence belongs to the bacterial ribosomal protein bS16 family.

This is Small ribosomal subunit protein bS16 from Borreliella burgdorferi (strain ATCC 35210 / DSM 4680 / CIP 102532 / B31) (Borrelia burgdorferi).